The primary structure comprises 196 residues: tRNA (pseudouridine(54)-N(1))-methyltransferase (196 aa).

Leu-126 is a binding site for S-adenosyl-L-methionine.

Belongs to the methyltransferase superfamily. TrmY family. In terms of assembly, homodimer.

The protein localises to the cytoplasm. The enzyme catalyses pseudouridine(54) in tRNA + S-adenosyl-L-methionine = N(1)-methylpseudouridine(54) in tRNA + S-adenosyl-L-homocysteine + H(+). In terms of biological role, specifically catalyzes the N1-methylation of pseudouridine at position 54 (Psi54) in tRNAs. This chain is tRNA (pseudouridine(54)-N(1))-methyltransferase, found in Halobacterium salinarum (strain ATCC 700922 / JCM 11081 / NRC-1) (Halobacterium halobium).